The chain runs to 280 residues: Putative pyruvate, phosphate dikinase regulatory protein (280 aa).

152-159 (GISRTSKT) is a binding site for ADP.

It belongs to the pyruvate, phosphate/water dikinase regulatory protein family. PDRP subfamily.

The catalysed reaction is N(tele)-phospho-L-histidyl/L-threonyl-[pyruvate, phosphate dikinase] + ADP = N(tele)-phospho-L-histidyl/O-phospho-L-threonyl-[pyruvate, phosphate dikinase] + AMP + H(+). It catalyses the reaction N(tele)-phospho-L-histidyl/O-phospho-L-threonyl-[pyruvate, phosphate dikinase] + phosphate + H(+) = N(tele)-phospho-L-histidyl/L-threonyl-[pyruvate, phosphate dikinase] + diphosphate. Its function is as follows. Bifunctional serine/threonine kinase and phosphorylase involved in the regulation of the pyruvate, phosphate dikinase (PPDK) by catalyzing its phosphorylation/dephosphorylation. This chain is Putative pyruvate, phosphate dikinase regulatory protein, found in Clostridioides difficile (strain 630) (Peptoclostridium difficile).